Here is a 405-residue protein sequence, read N- to C-terminus: Potassium channel subfamily K member 13 (405 aa).

The Cytoplasmic segment spans residues 1–19 (MAGRGCGCSPGHLNEDNAR). A helical membrane pass occupies residues 20–40 (FLLLAGLILLYLLGGAAVFSA). Residues asparagine 59 and asparagine 65 are each glycosylated (N-linked (GlcNAc...) asparagine). The segment at residues 95–115 (WDFTGAFYFVGTVVSTIGFGM) is an intramembrane region (pore-forming). 3 residues coordinate K(+): threonine 110, isoleucine 111, and glycine 112. Residues 110–115 (TIGFGM) are selectivity filter 1. The chain crosses the membrane as a helical span at residues 125-145 (IFLIFYGLIGCASTILFFNLF). The Cytoplasmic segment spans residues 146–193 (LERLITVIACVMRSCHQQQLRRRGAVTQDNMKAPEKGEADSLTGWKPS). Residues 194–214 (VYYVMLILCLASVAISCGASA) traverse the membrane as a helical segment. The pore-forming intramembrane region spans 224–244 (YFDSVYFCFVAFSTIGFGDLV). Residues threonine 237, isoleucine 238, glycine 239, and phenylalanine 240 each contribute to the K(+) site. The selectivity filter 2 stretch occupies residues 237 to 242 (TIGFGD). Residues 263–283 (FLILMGVCCIYSLFNVISILI) form a helical membrane-spanning segment. The Cytoplasmic segment spans residues 284–405 (KQTVNWILRK…NRLAETSGDR (122 aa)).

This sequence belongs to the two pore domain potassium channel (TC 1.A.1.8) family. In terms of assembly, homodimer. Heterodimer with KCNK12.

Its subcellular location is the cell membrane. The catalysed reaction is K(+)(in) = K(+)(out). In terms of biological role, k(+) channel that conducts outward rectifying tonic currents potentiated by purinergic signals. Homo- and heterodimerizes to form functional channels with distinct regulatory and gating properties. Contributes most of K(+) currents at the plasma membrane of resting microglia. Maintains a depolarized membrane potential required for proper ramified microglia morphology and phagocytosis, selectively mediating microglial pruning of presynaptic compartments at hippocampal excitatory synapses. Upon local release of ATP caused by neuronal injury or infection, it is potentiated by P2RY12 and P2RX7 receptor signaling and contributes to ATP-triggered K(+) efflux underlying microglial NLRP3 inflammasome assembly and IL1B release. The chain is Potassium channel subfamily K member 13 from Mus musculus (Mouse).